The following is a 166-amino-acid chain: Cold-inducible RNA-binding protein (166 aa).

The RRM domain occupies 6–84 (GKLFVGGLNF…RQIRVDQAGK (79 aa)). Positions 68–166 (NGKSVDGRQI…DSYDSYTTQE (99 aa)) are disordered. Residues 93 to 120 (YRGGSSGGRGFFRGGRGRGGGGDRGYGG) are compositionally biased toward gly residues. The segment covering 121–166 (SSRFENRSGGYQSSGSRDYYGRSHGSYGDRSGGSYRDSYDSYTTQE) has biased composition (low complexity).

In terms of assembly, interacts with prmt1. Interacts with elavl1/elrA (via RRM3). Associates with ribosomes. In terms of processing, methylated on arginine residues within RGG motifs. Methylation by prmt1 promotes cytoplasmic accumulation.

It localises to the nucleus. Its subcellular location is the nucleoplasm. It is found in the cytoplasm. Its function is as follows. Cold-inducible mRNA binding protein. Acts cooperatively with elavl1/elrA to stabilize AU-rich element (ARE)-containing mRNAs by binding to themm and inhibiting their deadenylation. Essential for embryonic gastrulation and neural development, acting to maintain the expression of a set of adhesion molecules, and cell movement during embryogenesis. Required for pronephros development. This is Cold-inducible RNA-binding protein from Xenopus tropicalis (Western clawed frog).